A 207-amino-acid chain; its full sequence is Thiamine-phosphate synthase (207 aa).

4-amino-2-methyl-5-(diphosphooxymethyl)pyrimidine-binding positions include 36–40 and N68; that span reads QLRMK. Residues D69 and D88 each coordinate Mg(2+). Residue S106 participates in 4-amino-2-methyl-5-(diphosphooxymethyl)pyrimidine binding. 132–134 serves as a coordination point for 2-[(2R,5Z)-2-carboxy-4-methylthiazol-5(2H)-ylidene]ethyl phosphate; that stretch reads TNT. 4-amino-2-methyl-5-(diphosphooxymethyl)pyrimidine is bound at residue K135. Residues G162 and 182 to 183 contribute to the 2-[(2R,5Z)-2-carboxy-4-methylthiazol-5(2H)-ylidene]ethyl phosphate site; that span reads VS.

This sequence belongs to the thiamine-phosphate synthase family. The cofactor is Mg(2+).

It carries out the reaction 2-[(2R,5Z)-2-carboxy-4-methylthiazol-5(2H)-ylidene]ethyl phosphate + 4-amino-2-methyl-5-(diphosphooxymethyl)pyrimidine + 2 H(+) = thiamine phosphate + CO2 + diphosphate. It catalyses the reaction 2-(2-carboxy-4-methylthiazol-5-yl)ethyl phosphate + 4-amino-2-methyl-5-(diphosphooxymethyl)pyrimidine + 2 H(+) = thiamine phosphate + CO2 + diphosphate. The enzyme catalyses 4-methyl-5-(2-phosphooxyethyl)-thiazole + 4-amino-2-methyl-5-(diphosphooxymethyl)pyrimidine + H(+) = thiamine phosphate + diphosphate. It participates in cofactor biosynthesis; thiamine diphosphate biosynthesis; thiamine phosphate from 4-amino-2-methyl-5-diphosphomethylpyrimidine and 4-methyl-5-(2-phosphoethyl)-thiazole: step 1/1. Functionally, condenses 4-methyl-5-(beta-hydroxyethyl)thiazole monophosphate (THZ-P) and 2-methyl-4-amino-5-hydroxymethyl pyrimidine pyrophosphate (HMP-PP) to form thiamine monophosphate (TMP). This is Thiamine-phosphate synthase from Methanococcus maripaludis (strain C5 / ATCC BAA-1333).